Reading from the N-terminus, the 496-residue chain is Myotilin (496 aa).

The disordered stretch occupies residues methionine 1 to glutamine 37. Residue arginine 20 is modified to Omega-N-methylarginine. The interval proline 78 to isoleucine 149 is necessary for interaction with ACTN1. 2 stretches are compositionally biased toward polar residues: residues asparagine 202–proline 213 and proline 221–alanine 233. The interval asparagine 202–aspartate 239 is disordered. Positions proline 213–tyrosine 491 are necessary for interaction with FLNC. Residues proline 213–leucine 496 form a necessary for interaction with ACTA1 region. Ig-like C2-type domains follow at residues proline 248–threonine 333 and proline 347–threonine 439.

It belongs to the myotilin/palladin family. Homodimer. Interacts with ACTA1, ACTN1, FLNA, FLNB, FLNC, and MYOZ2. Interacts with the C-terminal region of MYOZ1. Expressed in skeletal muscle (at protein level).

It localises to the cell membrane. Its subcellular location is the sarcolemma. The protein resides in the cytoplasm. It is found in the cytoskeleton. The protein localises to the myofibril. It localises to the sarcomere. Its subcellular location is the z line. Functionally, component of a complex of multiple actin cross-linking proteins. Involved in the control of myofibril assembly and stability at the Z lines in muscle cells. This Mus musculus (Mouse) protein is Myotilin (Myot).